The following is a 263-amino-acid chain: Proenkephalin-A (263 aa).

The signal sequence occupies residues 1 to 24 (MARFLGLCTWLLALGPGLLATVRA). 3 cysteine pairs are disulfide-bonded: C26/C48, C30/C52, and C33/C65. 2 consecutive propeptides follow at residues 192–203 (SPHLEDETKELQ) and 213–223 (VGRPEWWMDYQ). The residue at position 247 (S247) is a Phosphoserine.

The protein belongs to the opioid neuropeptide precursor family. Post-translationally, proenkephalin-A is cleaved by CTSL to generate Met-enkephalin. Processed and degraded by ACE. In terms of processing, probably cleaved by ACE. Post-translationally, processed by ACE to generate Met-enkephalin in the nucleus accumbens of the brain. The N-terminal domain contains 6 conserved cysteines thought to be involved in disulfide bonding and/or processing. As to expression, secreted by neuroendocrine chromaffin cells through cromaffin granules.

The protein localises to the cytoplasmic vesicle. Its subcellular location is the secretory vesicle. The protein resides in the chromaffin granule lumen. It localises to the secreted. In terms of biological role, neuropeptide that competes with and mimic the effects of opiate drugs. They play a role in a number of physiologic functions, including pain perception and responses to stress. Met-enkephalin-Arg-Phe neuropeptide acts as a strong ligand of Mu-type opioid receptor OPRM1. Met-enkephalin-Arg-Phe-binding to OPRM1 in the nucleus accumbens of the brain increases activation of OPRM1, leading to long-term synaptic depression of glutamate release. Its function is as follows. Increases glutamate release in the striatum and decreases GABA concentration in the striatum. Functionally, increases glutamate release in the striatum. In terms of biological role, enkelytin possesses antibacterial activity against Gram-positive bacteria such as Micrococcus luteus and Bacillus megaterium. This chain is Proenkephalin-A (PENK), found in Bos taurus (Bovine).